A 359-amino-acid polypeptide reads, in one-letter code: Ornithine cyclodeaminase (359 aa).

Residues Arg53 and Lys77 each coordinate L-ornithine. Residues Thr92, Arg120, 147–148 (AQ), Asp169, Thr209, 232–235 (VGGD), Lys239, and Ser300 contribute to the NAD(+) site. L-ornithine is bound at residue Arg120. Asp235 contributes to the L-ornithine binding site. Asp235 (proton donor/acceptor) is an active-site residue. Val301 is a binding site for L-ornithine.

It belongs to the ornithine cyclodeaminase/mu-crystallin family. NAD(+) serves as cofactor.

It carries out the reaction L-ornithine = L-proline + NH4(+). Its pathway is amino-acid biosynthesis; L-proline biosynthesis; L-proline from L-ornithine: step 1/1. Its function is as follows. Catalyzes the conversion of L-ornithine into L-proline with release of ammonia. This is Ornithine cyclodeaminase from Brucella abortus biovar 1 (strain 9-941).